Reading from the N-terminus, the 256-residue chain is Ubiquinone/menaquinone biosynthesis C-methyltransferase UbiE (256 aa).

Residues 1 to 12 are compositionally biased toward basic and acidic residues; that stretch reads MTDPRKGDHAEP. The interval 1 to 21 is disordered; the sequence is MTDPRKGDHAEPTTHFGYQDV. Residues Thr79, Asp100, and 128-129 contribute to the S-adenosyl-L-methionine site; that span reads DA.

The protein belongs to the class I-like SAM-binding methyltransferase superfamily. MenG/UbiE family.

It carries out the reaction a 2-demethylmenaquinol + S-adenosyl-L-methionine = a menaquinol + S-adenosyl-L-homocysteine + H(+). The catalysed reaction is a 2-methoxy-6-(all-trans-polyprenyl)benzene-1,4-diol + S-adenosyl-L-methionine = a 5-methoxy-2-methyl-3-(all-trans-polyprenyl)benzene-1,4-diol + S-adenosyl-L-homocysteine + H(+). It functions in the pathway quinol/quinone metabolism; menaquinone biosynthesis; menaquinol from 1,4-dihydroxy-2-naphthoate: step 2/2. The protein operates within cofactor biosynthesis; ubiquinone biosynthesis. Functionally, methyltransferase required for the conversion of demethylmenaquinol (DMKH2) to menaquinol (MKH2) and the conversion of 2-polyprenyl-6-methoxy-1,4-benzoquinol (DDMQH2) to 2-polyprenyl-3-methyl-6-methoxy-1,4-benzoquinol (DMQH2). The chain is Ubiquinone/menaquinone biosynthesis C-methyltransferase UbiE from Pseudomonas entomophila (strain L48).